The chain runs to 164 residues: Ribosome maturation factor RimP (164 aa).

This sequence belongs to the RimP family.

It localises to the cytoplasm. Functionally, required for maturation of 30S ribosomal subunits. The polypeptide is Ribosome maturation factor RimP (Mesoplasma florum (strain ATCC 33453 / NBRC 100688 / NCTC 11704 / L1) (Acholeplasma florum)).